Consider the following 205-residue polypeptide: Urease accessory protein UreG (205 aa).

10 to 17 provides a ligand contact to GTP; the sequence is GPVGAGKT.

This sequence belongs to the SIMIBI class G3E GTPase family. UreG subfamily. Homodimer. UreD, UreF and UreG form a complex that acts as a GTP-hydrolysis-dependent molecular chaperone, activating the urease apoprotein by helping to assemble the nickel containing metallocenter of UreC. The UreE protein probably delivers the nickel.

Its subcellular location is the cytoplasm. Functionally, facilitates the functional incorporation of the urease nickel metallocenter. This process requires GTP hydrolysis, probably effectuated by UreG. The chain is Urease accessory protein UreG from Corynebacterium glutamicum (strain ATCC 13032 / DSM 20300 / JCM 1318 / BCRC 11384 / CCUG 27702 / LMG 3730 / NBRC 12168 / NCIMB 10025 / NRRL B-2784 / 534).